Reading from the N-terminus, the 236-residue chain is 2-C-methyl-D-erythritol 4-phosphate cytidylyltransferase (236 aa).

The protein belongs to the IspD/TarI cytidylyltransferase family. IspD subfamily. Homodimer.

It catalyses the reaction 2-C-methyl-D-erythritol 4-phosphate + CTP + H(+) = 4-CDP-2-C-methyl-D-erythritol + diphosphate. The protein operates within isoprenoid biosynthesis; isopentenyl diphosphate biosynthesis via DXP pathway; isopentenyl diphosphate from 1-deoxy-D-xylulose 5-phosphate: step 2/6. In terms of biological role, catalyzes the formation of 4-diphosphocytidyl-2-C-methyl-D-erythritol from CTP and 2-C-methyl-D-erythritol 4-phosphate (MEP). The polypeptide is 2-C-methyl-D-erythritol 4-phosphate cytidylyltransferase (Cronobacter sakazakii (strain ATCC BAA-894) (Enterobacter sakazakii)).